The following is a 174-amino-acid chain: Secreted protein A (174 aa).

An N-terminal signal peptide occupies residues 1–19 (MRLLITLFAIFALFNCSLA). N-linked (GlcNAc...) asparagine glycosylation is present at Asn156.

The protein belongs to the Sct family. In terms of processing, probably contains disulfide bonds.

It is found in the secreted. The protein resides in the extracellular vesicle. The polypeptide is Secreted protein A (p17) (Dictyostelium discoideum (Social amoeba)).